Here is a 624-residue protein sequence, read N- to C-terminus: uncharacterized protein (624 aa).

Residues 1–29 (MRFHRQGTAATVGVLLIVLLGFCWKLSES) form the signal peptide. Asparagine 68, asparagine 150, asparagine 219, asparagine 366, asparagine 441, asparagine 447, asparagine 464, and asparagine 528 each carry an N-linked (GlcNAc...) asparagine glycan. Residues 141 to 174 (LERRHGRFGNGTHGDHPKGPPPPPPPDEKDRGSQ) form a disordered region.

It is found in the secreted. This is an uncharacterized protein from Saccharomyces cerevisiae (strain ATCC 204508 / S288c) (Baker's yeast).